Here is a 100-residue protein sequence, read N- to C-terminus: Urease subunit gamma (100 aa).

The protein belongs to the urease gamma subunit family. As to quaternary structure, heterotrimer of UreA (gamma), UreB (beta) and UreC (alpha) subunits. Three heterotrimers associate to form the active enzyme.

It localises to the cytoplasm. It catalyses the reaction urea + 2 H2O + H(+) = hydrogencarbonate + 2 NH4(+). It participates in nitrogen metabolism; urea degradation; CO(2) and NH(3) from urea (urease route): step 1/1. The protein is Urease subunit gamma of Burkholderia cenocepacia (strain ATCC BAA-245 / DSM 16553 / LMG 16656 / NCTC 13227 / J2315 / CF5610) (Burkholderia cepacia (strain J2315)).